Consider the following 222-residue polypeptide: Elongation factor 1-beta' (222 aa).

The tract at residues 71–113 (SQGTSPLTAGAKPTAPAPAAKDDDDDDVDLFGSGDEEEDAEAE) is disordered. A compositionally biased stretch (low complexity) spans 78–89 (TAGAKPTAPAPA). Acidic residues predominate over residues 92–111 (DDDDDDVDLFGSGDEEEDAE).

It belongs to the EF-1-beta/EF-1-delta family. As to quaternary structure, EF-1 is composed of 4 subunits: alpha, beta, beta' and gamma. In terms of processing, phosphorylated.

EF-1-beta and EF-1-beta' stimulate the exchange of GDP bound to EF-1-alpha to GTP. The chain is Elongation factor 1-beta' from Bombyx mori (Silk moth).